The primary structure comprises 1228 residues: Nitrate reductase alpha chain (1228 aa).

The 4Fe-4S Mo/W bis-MGD-type domain occupies 47 to 111 (DKVVRSTHGV…SFSWYIYSPL (65 aa)). The [4Fe-4S] cluster site is built by H54, C58, C62, and C97. Position 227 (D227) interacts with Mo-bis(molybdopterin guanine dinucleotide).

It belongs to the prokaryotic molybdopterin-containing oxidoreductase family. [4Fe-4S] cluster serves as cofactor. The cofactor is Mo-bis(molybdopterin guanine dinucleotide).

Its subcellular location is the cell membrane. The enzyme catalyses nitrate + a quinol = a quinone + nitrite + H2O. In terms of biological role, the alpha chain is the actual site of nitrate reduction. In Bacillus subtilis (strain 168), this protein is Nitrate reductase alpha chain (narG).